The chain runs to 441 residues: Keratin, type I cytoskeletal 15 (441 aa).

The head stretch occupies residues 2-91 (LLLGHASTST…GGSDLLLGTS (90 aa)). The interval 92–127 (GKEAMQNLNDRLASYLDKVRSLEGKNHELELKIKDW) is coil 1A. The IF rod domain maps to 92 to 407 (GKEAMQNLND…MLLDSEDSKG (316 aa)). Residues 128–149 (YSQVIPGTGGPDARDYGHLEKE) are linker 1. Residues 150–241 (IEDLQNKVNN…KNHEEDMKAA (92 aa)) are coil 1B. Residues 242 to 261 (SSGIAGQVNVELDAAPGTNL) form a linker 12 region. The segment at 262-403 (LDELDACRRD…ATYRMLLDSE (142 aa)) is coil 2. Positions 404–441 (DSKGSIINHKILTAIEKLVDGIVLSTEVLEKQIPVLSY) are tail.

The protein belongs to the intermediate filament family. Heterotetramer of two type I and two type II keratins. In terms of tissue distribution, expressed in skin.

The chain is Keratin, type I cytoskeletal 15 (KRT15) from Protopterus aethiopicus (Marbled lungfish).